Here is a 227-residue protein sequence, read N- to C-terminus: Large ribosomal subunit protein uL3 (227 aa).

The interval 146-167 is disordered; sequence RGPMAHGSKFHRHQGSNGACSS.

It belongs to the universal ribosomal protein uL3 family. As to quaternary structure, part of the 50S ribosomal subunit. Forms a cluster with proteins L14 and L19.

Its function is as follows. One of the primary rRNA binding proteins, it binds directly near the 3'-end of the 23S rRNA, where it nucleates assembly of the 50S subunit. The protein is Large ribosomal subunit protein uL3 of Agathobacter rectalis (strain ATCC 33656 / DSM 3377 / JCM 17463 / KCTC 5835 / VPI 0990) (Eubacterium rectale).